Consider the following 37-residue polypeptide: Large ribosomal subunit protein bL36 (37 aa).

This sequence belongs to the bacterial ribosomal protein bL36 family.

This is Large ribosomal subunit protein bL36 from Legionella pneumophila subsp. pneumophila (strain Philadelphia 1 / ATCC 33152 / DSM 7513).